The chain runs to 33 residues: MEALVYTFLLVSTLGIIFFAIFFREPPTISTKK.

The chain crosses the membrane as a helical span at residues 3-23; that stretch reads ALVYTFLLVSTLGIIFFAIFF.

This sequence belongs to the PsbT family. In terms of assembly, PSII is composed of 1 copy each of membrane proteins PsbA, PsbB, PsbC, PsbD, PsbE, PsbF, PsbH, PsbI, PsbJ, PsbK, PsbL, PsbM, PsbT, PsbY, PsbZ, Psb30/Ycf12, at least 3 peripheral proteins of the oxygen-evolving complex and a large number of cofactors. It forms dimeric complexes.

The protein localises to the plastid. The protein resides in the chloroplast thylakoid membrane. In terms of biological role, found at the monomer-monomer interface of the photosystem II (PS II) dimer, plays a role in assembly and dimerization of PSII. PSII is a light-driven water plastoquinone oxidoreductase, using light energy to abstract electrons from H(2)O, generating a proton gradient subsequently used for ATP formation. This Helianthus annuus (Common sunflower) protein is Photosystem II reaction center protein T.